We begin with the raw amino-acid sequence, 856 residues long: DNA mismatch repair protein MutS (856 aa).

An ATP-binding site is contributed by 605–612; the sequence is GPNMSGKS.

It belongs to the DNA mismatch repair MutS family.

Its function is as follows. This protein is involved in the repair of mismatches in DNA. It is possible that it carries out the mismatch recognition step. This protein has a weak ATPase activity. This Lysinibacillus sphaericus (strain C3-41) protein is DNA mismatch repair protein MutS.